The following is a 287-amino-acid chain: Viomycin phosphotransferase (287 aa).

Aspartate 190 functions as the Proton acceptor in the catalytic mechanism.

Belongs to the aminoglycoside phosphotransferase family.

The enzyme catalyses viomycin + ATP = O-phosphoviomycin + ADP + H(+). Its function is as follows. The aminoglycoside phosphotransferases achieve inactivation of their antibiotic substrates by phosphorylation. In Streptomyces vinaceus, this protein is Viomycin phosphotransferase (vph).